A 1104-amino-acid chain; its full sequence is Mitogen-activated protein kinase kinase kinase 9 (1104 aa).

Residues 12–22 (ASAAAAAPPGE) are compositionally biased toward low complexity. Residues 12–47 (ASAAAAAPPGEDGAGAGAEEEEEEEEEAAAAVGPGE) are disordered. Over residues 29–39 (AEEEEEEEEEA) the composition is skewed to acidic residues. Positions 52–116 (APLPYWTAVF…PSNYVTPRSA (65 aa)) constitute an SH3 domain. Residues 144–412 (LTLEEIIGIG…LTTIEESGFF (269 aa)) form the Protein kinase domain. Residues 150-158 (IGIGGFGKV) and K171 each bind ATP. The active-site Proton acceptor is D268. Phosphothreonine; by autocatalysis occurs at positions 304 and 305. Residue S308 is modified to Phosphoserine; by autocatalysis. Phosphothreonine; by autocatalysis is present on T312. Leucine-zipper regions lie at residues 430–451 (IQEM…EEEL) and 465–486 (LRRR…ELNI). Disordered stretches follow at residues 532 to 636 (ASPT…PHFH), 675 to 742 (MEDE…LKRG), 781 to 819 (EEPE…FKKE), and 890 to 1038 (RDPN…CFAS). The residue at position 533 (S533) is a Phosphoserine. Polar residues-rich tracts occupy residues 566–575 (PGESSKTWGR) and 723–739 (PVNS…TNSL). Basic and acidic residues predominate over residues 785 to 797 (PPAREEKKRREGL). Residues 893–910 (NQSLTPTHVTLTTPSQPS) are compositionally biased toward polar residues. Residues 929–944 (SRSPSSNGLSPSPGAG) show a composition bias toward low complexity. The span at 1014 to 1038 (HARSTSPANSSSTETPSNLDSCFAS) shows a compositional bias: polar residues.

Belongs to the protein kinase superfamily. STE Ser/Thr protein kinase family. MAP kinase kinase kinase subfamily. As to quaternary structure, homodimer. Mg(2+) serves as cofactor. In terms of processing, autophosphorylation on serine and threonine residues within the activation loop plays a role in enzyme activation. Thr-312 is likely to be the main autophosphorylation site. Autophosphorylation also occurs on Thr-304 and Ser-308. As to expression, expressed in epithelial tumor cell lines of colonic, breast and esophageal origin.

The enzyme catalyses L-seryl-[protein] + ATP = O-phospho-L-seryl-[protein] + ADP + H(+). The catalysed reaction is L-threonyl-[protein] + ATP = O-phospho-L-threonyl-[protein] + ADP + H(+). With respect to regulation, homodimerization via the leucine zipper domains is required for autophosphorylation of multiple sites in the activation loop and subsequent activation. Autophosphorylation at Thr-312 is the key step in activation of MAP3K9/MLK1 and is required for full phosphorylation. Autophosphorylation at Thr-304 and Ser-308 have been shown to be of secondary importance in the activation of MAP3K9/MLK1. CEP-1347 and many indolocarbazole analogs have been shown to act as inhibitors of MAP3K9/MLK1 activity. Serine/threonine kinase which acts as an essential component of the MAP kinase signal transduction pathway. Plays an important role in the cascades of cellular responses evoked by changes in the environment. Once activated, acts as an upstream activator of the MKK/JNK signal transduction cascade through the phosphorylation of MAP2K4/MKK4 and MAP2K7/MKK7 which in turn activate the JNKs. The MKK/JNK signaling pathway regulates stress response via activator protein-1 (JUN) and GATA4 transcription factors. Also plays a role in mitochondrial death signaling pathway, including the release cytochrome c, leading to apoptosis. This is Mitogen-activated protein kinase kinase kinase 9 (MAP3K9) from Homo sapiens (Human).